Consider the following 269-residue polypeptide: MNIVSNRQEQAFSNPLAMRAASRNGSWTRETSGAALGYVQANLAILPSALADDFLRFCVRNPKACPLVGISEKGSPRIPDLGVDLDIRTDVPRYRVWEDGELAAEPTDISDLWSDDLVVFAIGCSFSFEEALIANGIGLRHVAEGHNVAMYRTNIECVPAGPFSGPMVVSMRPLAPADAIRAVQITSRMPAVHGAPIHIGLPASIGIENLDQPDYGDPTRIMPDEMPVFWACGVTPQAVIQAARPKFAITHAPGCMLVTDKPNAALIAF.

The protein belongs to the D-glutamate cyclase family.

The sequence is that of Putative hydro-lyase RL2444 from Rhizobium johnstonii (strain DSM 114642 / LMG 32736 / 3841) (Rhizobium leguminosarum bv. viciae).